Reading from the N-terminus, the 64-residue chain is Protein DsrB (64 aa).

Belongs to the DsrB family.

In Salmonella arizonae (strain ATCC BAA-731 / CDC346-86 / RSK2980), this protein is Protein DsrB.